A 30-amino-acid chain; its full sequence is Cyclotide hyen-K (30 aa).

Residues 1–30 (GIPCGESCIFIPCITTVVGCSCSNKVCYDN) constitute a cross-link (cyclopeptide (Gly-Asn)). 3 cysteine pairs are disulfide-bonded: cysteine 4-cysteine 20, cysteine 8-cysteine 22, and cysteine 13-cysteine 27.

This is a cyclic peptide. Detected in seeds (at protein level).

Probably participates in a plant defense mechanism. The sequence is that of Cyclotide hyen-K from Pigea enneasperma (Spade flower).